Reading from the N-terminus, the 445-residue chain is Tripartite motif-containing protein 43B (445 aa).

An RING-type zinc finger spans residues 16–57 (CSICQGIFMNPVYLKCGHKFCEACLLLFQEDIKFPAYCPMCM). The B box-type zinc-finger motif lies at 88–129 (SEEHKCVTHKAKKMIFCDKSKILLCHLCSDSQEHSGHTHCSI). Zn(2+) is bound by residues C93, H96, C115, and H121. The B30.2/SPRY domain occupies 271–445 (RLRAHSIPGL…VRPFFSAVYT (175 aa)).

It belongs to the TRIM/RBCC family.

The sequence is that of Tripartite motif-containing protein 43B from Mus musculus (Mouse).